A 465-amino-acid chain; its full sequence is MGKTLYHKLYNSHIVYEQNNVTSILYIDLHLIHEVTXPQAFNSLRLKNRKIRQPKKTFATMDHNVPTHNRDIKNSEYMAKIQMEELSKNCKDFNIKLYDINHPHQGIVHVLGPEKGMTLPGMVIVCGDSHTSTHGAFGALAFGIGTSEVEHVLATQTLQQNRLKTMNIEITGNINPMVFAKDIILSIIRKLSTSGGIGYVIEFSGSVISQLSMESRMTICNMSIEMGAKSGLIAPDIITYNYLKNKSYSPKNKYWNNAINYWNTLKSDKNAFFDKKISINISNLAPQITWGTKPDQVISIDEPIPNIDSLKMFLNKNQLKNPLLYMGLKPGEYLNNLVVDKVFIGSCTNSRTEDLRAAANIVQNTHVAKNVHAIVVPGSGMVKLQAEEEGLDKIFINAGFEWRLPGCSMCLGMNLDRLKPKERCASTSNRNFEGRQGRDGRTHLVSPAMAAAAAIFGHFVDIRKI.

3 residues coordinate [4Fe-4S] cluster: Cys347, Cys407, and Cys410.

The protein belongs to the aconitase/IPM isomerase family. LeuC type 1 subfamily. In terms of assembly, heterodimer of LeuC and LeuD. Requires [4Fe-4S] cluster as cofactor.

It catalyses the reaction (2R,3S)-3-isopropylmalate = (2S)-2-isopropylmalate. Its pathway is amino-acid biosynthesis; L-leucine biosynthesis; L-leucine from 3-methyl-2-oxobutanoate: step 2/4. Catalyzes the isomerization between 2-isopropylmalate and 3-isopropylmalate, via the formation of 2-isopropylmaleate. This chain is 3-isopropylmalate dehydratase large subunit, found in Buchnera aphidicola subsp. Pemphigus spyrothecae.